Consider the following 158-residue polypeptide: Acireductone dioxygenase (158 aa).

4 residues coordinate Fe(2+): His81, His83, Glu87, and His126. The Ni(2+) site is built by His81, His83, Glu87, and His126.

Belongs to the acireductone dioxygenase (ARD) family. It depends on Fe(2+) as a cofactor. Ni(2+) is required as a cofactor.

The protein resides in the cytoplasm. It localises to the nucleus. The catalysed reaction is 1,2-dihydroxy-5-(methylsulfanyl)pent-1-en-3-one + O2 = 4-methylsulfanyl-2-oxobutanoate + formate + 2 H(+). It catalyses the reaction 1,2-dihydroxy-5-(methylsulfanyl)pent-1-en-3-one + O2 = 3-(methylsulfanyl)propanoate + CO + formate + 2 H(+). It participates in amino-acid biosynthesis; L-methionine biosynthesis via salvage pathway; L-methionine from S-methyl-5-thio-alpha-D-ribose 1-phosphate: step 5/6. Functionally, catalyzes 2 different reactions between oxygen and the acireductone 1,2-dihydroxy-3-keto-5-methylthiopentene (DHK-MTPene) depending upon the metal bound in the active site. Fe-containing acireductone dioxygenase (Fe-ARD) produces formate and 2-keto-4-methylthiobutyrate (KMTB), the alpha-ketoacid precursor of methionine in the methionine recycle pathway. Ni-containing acireductone dioxygenase (Ni-ARD) produces methylthiopropionate, carbon monoxide and formate, and does not lie on the methionine recycle pathway. This chain is Acireductone dioxygenase, found in Metarhizium robertsii (strain ARSEF 23 / ATCC MYA-3075) (Metarhizium anisopliae (strain ARSEF 23)).